The chain runs to 358 residues: PqqA peptide cyclase (358 aa).

The Radical SAM core domain maps to 4–219 (PSPPMSLLAE…VEAERAKGGL (216 aa)). The [4Fe-4S] cluster site is built by cysteine 18, cysteine 22, and cysteine 25.

It belongs to the radical SAM superfamily. PqqE family. As to quaternary structure, interacts with PqqD. The interaction is necessary for activity of PqqE. Requires [4Fe-4S] cluster as cofactor.

It catalyses the reaction [PQQ precursor protein] + S-adenosyl-L-methionine = E-Y cross-linked-[PQQ precursor protein] + 5'-deoxyadenosine + L-methionine + H(+). Its pathway is cofactor biosynthesis; pyrroloquinoline quinone biosynthesis. Catalyzes the cross-linking of a glutamate residue and a tyrosine residue in the PqqA protein as part of the biosynthesis of pyrroloquinoline quinone (PQQ). This Gluconobacter oxydans (strain 621H) (Gluconobacter suboxydans) protein is PqqA peptide cyclase.